The chain runs to 150 residues: 3-hydroxyacyl-[acyl-carrier-protein] dehydratase FabZ (150 aa).

His-54 is an active-site residue.

Belongs to the thioester dehydratase family. FabZ subfamily.

Its subcellular location is the cytoplasm. It carries out the reaction a (3R)-hydroxyacyl-[ACP] = a (2E)-enoyl-[ACP] + H2O. In terms of biological role, involved in unsaturated fatty acids biosynthesis. Catalyzes the dehydration of short chain beta-hydroxyacyl-ACPs and long chain saturated and unsaturated beta-hydroxyacyl-ACPs. The protein is 3-hydroxyacyl-[acyl-carrier-protein] dehydratase FabZ of Psychromonas ingrahamii (strain DSM 17664 / CCUG 51855 / 37).